The chain runs to 763 residues: MAP7 domain-containing protein 2 (763 aa).

Over residues 1-11 the composition is skewed to gly residues; sequence MERGGGGGFGT. Disordered stretches follow at residues 1 to 63, 96 to 124, 149 to 268, and 300 to 540; these read MERG…KERR, WRKL…LREE, SWGA…DVGK, and PLRR…KQKE. The span at 52-63 shows a compositional bias: basic and acidic residues; it reads SGERQRLAKERR. The stretch at 54–147 forms a coiled coil; it reads ERQRLAKERR…RTQQLELKKK (94 aa). Over residues 192-206 the composition is skewed to polar residues; that stretch reads ESTNACDKLSTSTMS. Basic and acidic residues-rich tracts occupy residues 355–371, 385–400, and 430–540; these read MPKR…EREG, ALEK…EKHA, and LAEK…KQKE.

Belongs to the MAP7 family. Interacts (via N-terminus) with microtubules; facilitates microtubule stabilization. Interacts with kinesin-1 family members, KIF5A, KIF5B and KIF5C.

Its subcellular location is the cytoplasm. It localises to the cytoskeleton. It is found in the microtubule organizing center. The protein resides in the centrosome. The protein localises to the midbody. Its subcellular location is the cell projection. It localises to the neuron projection. It is found in the axon. In terms of biological role, microtubule-stabilizing protein involved in the control of cell motility and neurite outgrowth. Acts as a critical cofactor for kinesin transport; in the proximal axon regulates kinesin-1 family members, KIF5A, KIF5B and KIF5C recruitment to microtubules and contributes to kinesin-1-mediated transport in the axons. This Pongo abelii (Sumatran orangutan) protein is MAP7 domain-containing protein 2 (MAP7D2).